The sequence spans 390 residues: Terminal nucleotidyltransferase 5C (390 aa).

Belongs to the TENT family.

The protein resides in the nucleus. It is found in the cytoplasm. It localises to the cytoskeleton. Its subcellular location is the microtubule organizing center. The protein localises to the centrosome. It catalyses the reaction RNA(n) + ATP = RNA(n)-3'-adenine ribonucleotide + diphosphate. In terms of biological role, catalyzes the transfer of one adenosine molecule from an ATP to an mRNA poly(A) tail bearing a 3'-OH terminal group and enhances mRNA stability and gene expression. The sequence is that of Terminal nucleotidyltransferase 5C from Gallus gallus (Chicken).